A 611-amino-acid polypeptide reads, in one-letter code: Menin (611 aa).

The interval 214–390 (GVAERSWLYL…SLLETGEERT (177 aa)) is interaction with FANCD2. The segment at 460–553 (REAEAAEAEE…SPPPEGPVLT (94 aa)) is disordered. Over residues 484–500 (RRESKPEEPPPPKKPAL) the composition is skewed to basic and acidic residues. Phosphoserine is present on residues Ser487 and Ser544. Residue Thr595 is modified to Phosphothreonine.

Component of the MLL-HCF complex, at least composed of KMT2A/MLL1, MEN1, ASH2L, RBBP5, DPY30, WDR5, HCFC1 and HCFC2. Component of the menin-associated histone methyltransferase complex, at least composed of KMT2B/MLL4, MEN1, ASH2L, RBBP5, DPY30 and WDR5. Interacts with POLR2B. Interacts with POLR2A phosphorylated at 'Ser-5', but not with the unphosphorylated, nor 'Ser-2' phosphorylated POLR2A forms. Interacts with FANCD2 and DBF4. Interacts with SMAD3, but not with SMAD2, nor SMAD4. Directly interacts with NFKB1, NFKB2 and RELA. Interacts with JUND (via MBM motif); inhibits the interaction of JUND with MAPK10 and the phosphorylation of JUND by MAP kinases MAPK8 and MAPK10. Interacts with KMT2A (via MBM motif). The KMT2A-MEN1 complex interacts with PSIP1 with a greater affinity as MEN1 enhances interaction of KMT2A with PSIP1. Widely expressed, with high levels in hippocampus, cerebral cortex, testis and thymus (at protein level). Also expressed at high levels in pancreatic islets, ovary and bone marrow. In the brain, highest expression in hippocampus pyramidal nerve cells (at protein level). In the testis, may be expressed in spermatogonia (at protein level). Low expression, if any, in skeletal muscle.

It localises to the nucleus. In terms of biological role, essential component of a MLL/SET1 histone methyltransferase (HMT) complex, a complex that specifically methylates 'Lys-4' of histone H3 (H3K4). Functions as a transcriptional regulator. Binds to the TERT promoter and represses telomerase expression. Plays a role in TGFB1-mediated inhibition of cell-proliferation, possibly regulating SMAD3 transcriptional activity. Represses JUND-mediated transcriptional activation on AP1 sites, as well as that mediated by NFKB subunit RELA. Positively regulates HOXC8 and HOXC6 gene expression. May be involved in normal hematopoiesis through the activation of HOXA9 expression. May be involved in DNA repair. The polypeptide is Menin (Men1) (Mus musculus (Mouse)).